Consider the following 337-residue polypeptide: Protoheme IX farnesyltransferase (337 aa).

The span at 1–17 (MPFSISKDTVSNQTTHV) shows a compositional bias: polar residues. Residues 1–41 (MPFSISKDTVSNQTTHVATAPASQRPDPVETKVEQEQGRPR) are disordered. The segment covering 27-41 (DPVETKVEQEQGRPR) has biased composition (basic and acidic residues). The next 8 helical transmembrane spans lie at 59–79 (IIEL…HGVP), 81–101 (LGLV…ANVF), 130–150 (SALI…GFGA), 153–173 (LSAA…SMLL), 196–216 (WTAV…IVFW), 250–270 (VAIQ…VLWP), 271–291 (VAHM…VFIV), and 311–331 (PMGL…AIAV).

Belongs to the UbiA prenyltransferase family. Protoheme IX farnesyltransferase subfamily.

The protein localises to the cell membrane. The enzyme catalyses heme b + (2E,6E)-farnesyl diphosphate + H2O = Fe(II)-heme o + diphosphate. The protein operates within porphyrin-containing compound metabolism; heme O biosynthesis; heme O from protoheme: step 1/1. Functionally, converts heme B (protoheme IX) to heme O by substitution of the vinyl group on carbon 2 of heme B porphyrin ring with a hydroxyethyl farnesyl side group. The polypeptide is Protoheme IX farnesyltransferase (Cutibacterium acnes (strain DSM 16379 / KPA171202) (Propionibacterium acnes)).